The sequence spans 756 residues: Polyribonucleotide nucleotidyltransferase (756 aa).

The Mg(2+) site is built by Asp-492 and Asp-498. The region spanning 559–618 is the KH domain; sequence PQHAEVFVNPDVIRIIIGPGGKNIKAITAATGASIDIEDSGKVSIFAPTYEAMEMAREMV. The S1 motif domain occupies 628 to 702; the sequence is GKNYVGKVRK…SRKAVLLEEQ (75 aa). The disordered stretch occupies residues 703-756; that stretch reads GVEWNPEDTARPSGPPRDRGDRGDRGGRGDRGGDRRGGDRGGRGGDRGRGGDRR. The span at 718 to 756 shows a compositional bias: basic and acidic residues; it reads PRDRGDRGDRGGRGDRGGDRRGGDRGGRGGDRGRGGDRR.

Belongs to the polyribonucleotide nucleotidyltransferase family. Mg(2+) serves as cofactor.

The protein localises to the cytoplasm. It carries out the reaction RNA(n+1) + phosphate = RNA(n) + a ribonucleoside 5'-diphosphate. Its function is as follows. Involved in mRNA degradation. Catalyzes the phosphorolysis of single-stranded polyribonucleotides processively in the 3'- to 5'-direction. The sequence is that of Polyribonucleotide nucleotidyltransferase from Nitratidesulfovibrio vulgaris (strain DSM 19637 / Miyazaki F) (Desulfovibrio vulgaris).